Consider the following 159-residue polypeptide: 17 kDa surface antigen (159 aa).

Residues 1–19 (MKLLSKIMIIALATSMLQA) form the signal peptide. The N-palmitoyl cysteine moiety is linked to residue C20. C20 is lipidated: S-diacylglycerol cysteine.

This sequence belongs to the rickettsiale 17 kDa surface antigen family.

It localises to the cell outer membrane. This chain is 17 kDa surface antigen (omp), found in Rickettsia conorii (strain ATCC VR-613 / Malish 7).